The following is an 874-amino-acid chain: Alanine--tRNA ligase (874 aa).

Residues H562, H566, C664, and H668 each contribute to the Zn(2+) site.

This sequence belongs to the class-II aminoacyl-tRNA synthetase family. Zn(2+) is required as a cofactor.

Its subcellular location is the cytoplasm. It carries out the reaction tRNA(Ala) + L-alanine + ATP = L-alanyl-tRNA(Ala) + AMP + diphosphate. Catalyzes the attachment of alanine to tRNA(Ala) in a two-step reaction: alanine is first activated by ATP to form Ala-AMP and then transferred to the acceptor end of tRNA(Ala). Also edits incorrectly charged Ser-tRNA(Ala) and Gly-tRNA(Ala) via its editing domain. The sequence is that of Alanine--tRNA ligase from Neisseria meningitidis serogroup A / serotype 4A (strain DSM 15465 / Z2491).